Here is a 185-residue protein sequence, read N- to C-terminus: Ribosome maturation factor RimP (185 aa).

Belongs to the RimP family.

The protein localises to the cytoplasm. Functionally, required for maturation of 30S ribosomal subunits. The sequence is that of Ribosome maturation factor RimP from Magnetococcus marinus (strain ATCC BAA-1437 / JCM 17883 / MC-1).